Reading from the N-terminus, the 375-residue chain is Trichodiene synthase (375 aa).

It belongs to the trichodiene synthase family.

It catalyses the reaction (2E,6E)-farnesyl diphosphate = trichodiene + diphosphate. The protein operates within sesquiterpene biosynthesis; trichothecene biosynthesis. Its function is as follows. TS is a member of the terpene cyclase group of enzymes. It catalyzes the isomerization and cyclization of farnesyl pyro-phosphate to form trichodiene, the first cyclic intermediate in the biosynthetic pathway for trichothecenes. It serves to branch trichothecene biosynthesis from the isoprenoid pathway. This chain is Trichodiene synthase (TRI5), found in Fusarium culmorum.